Reading from the N-terminus, the 138-residue chain is MGLNIRVIAPDRIVWNAKAEEVILPTSTGQLGILSGHAPLLTALDIGVMRVRITNTWTSIVLFGGFAEVENDEILILVNGAEEASVINLDKANKELIESSSLLNEAKTNKEKFEATQKLRKAKARVQAANTLTNQSIY.

Belongs to the ATPase epsilon chain family. F-type ATPases have 2 components, CF(1) - the catalytic core - and CF(0) - the membrane proton channel. CF(1) has five subunits: alpha(3), beta(3), gamma(1), delta(1), epsilon(1). CF(0) has three main subunits: a, b and c.

It is found in the plastid. Its subcellular location is the chloroplast thylakoid membrane. Produces ATP from ADP in the presence of a proton gradient across the membrane. The polypeptide is ATP synthase epsilon chain, chloroplastic (Galdieria sulphuraria (Red alga)).